The primary structure comprises 767 residues: Transducin-like enhancer protein 1 (767 aa).

Disordered stretches follow at residues 1-26 and 200-346; these read MFPQNRPPTHLQASVATGAASGPPQS and ADAE…TSAS. Composition is skewed to basic and acidic residues over residues 200–209, 235–255, and 277–289; these read ADAEHRERDP, RKTEEKDFGTDYGSDADRSED, and NGVDKPTLQRKDP. The interval 212 to 274 is CCN domain; sequence SCLTLPNGER…SPHSVHSYSS (63 aa). Positions 294 to 306 are enriched in low complexity; sequence PNSMTSSSSVSPS. Residues 324-346 show a composition bias toward polar residues; that stretch reads LKSSTPNSQSDLNTPGPSGTSAS. WD repeat units follow at residues 467 to 498, 525 to 555, 569 to 599, 611 to 641, 693 to 723, and 734 to 764; these read GIPRHARQLHVLNHGEVVCAVTISNSTRHVYT, NRDNYIRSCKLLPDGRSLIVGGEASTLSIWD, SSAPACYALAISPDAKVCFSCCSDGNIVVWD, GHTDGASCIDISHDGTKLWTGGLDNTVRCWD, LHESCVLSLQFASCGKWFVSTGKDNLLNAWR, and KESSSVLSCDVSTDDQFIVTGSGDKKATVYE.

It belongs to the WD repeat Groucho/TLE family. Ubiquitinated by XIAP/BIRC4. Abundantly expressed in brain, lung, testis and ovary in comparison with liver, heart, kidney and spleen. Ubiquitously expressed in the developing embryo. Present in unfertilized and fertilized eggs.

The protein resides in the nucleus. Functionally, nuclear effector molecule. In Xenopus laevis (African clawed frog), this protein is Transducin-like enhancer protein 1 (esg1).